A 634-amino-acid chain; its full sequence is Chaperone protein dnaK2 (634 aa).

At Thr197 the chain carries Phosphothreonine; by autocatalysis. Residues 592–634 (IGSSVYQQPGNQPPAPGTPDSNESNDKGGDDDVIDADFTETKD) are disordered. Residues 622–634 (DDVIDADFTETKD) show a composition bias toward acidic residues.

The protein belongs to the heat shock protein 70 family.

Functionally, acts as a chaperone. The polypeptide is Chaperone protein dnaK2 (dnaK2) (Prochlorococcus marinus subsp. pastoris (strain CCMP1986 / NIES-2087 / MED4)).